The primary structure comprises 139 residues: UPF0251 protein Csac_0224 (139 aa).

This sequence belongs to the UPF0251 family.

The protein is UPF0251 protein Csac_0224 of Caldicellulosiruptor saccharolyticus (strain ATCC 43494 / DSM 8903 / Tp8T 6331).